A 351-amino-acid polypeptide reads, in one-letter code: Outer membrane protein A (351 aa).

Positions 1-21 are cleaved as a signal peptide; sequence MKKTAIAITVALAGFATVAQA. Beta stranded transmembrane passes span 27-37, 55-66, 70-78, 96-107, 112-120, 147-156, 161-168, and 187-195; these read TWYTGAKLGWS, QLGAGAFGGYQV, VGFEMGYDW, QGVQLTAKLGYP, LDVYTRLGG, PVFAGGVEWA, IATRLEYQ, and LLSLGVSYR. Tandem repeats lie at residues 206 to 207, 208 to 209, 210 to 211, and 212 to 213. Residues 206 to 213 are 4 X 2 AA tandem repeats of A-P; sequence APAPAPAP. An OmpA-like domain is found at 215-343; that stretch reads VQTKHFTLKS…RVEIEVKGIK (129 aa). A disulfide bridge links C316 with C328.

This sequence belongs to the outer membrane OOP (TC 1.B.6) superfamily. OmpA family. In terms of assembly, monomer and homodimer.

The protein localises to the cell outer membrane. Functionally, with TolR probably plays a role in maintaining the position of the peptidoglycan cell wall in the periplasm. Acts as a porin with low permeability that allows slow penetration of small solutes; an internal gate slows down solute passage. In terms of biological role, required for conjugation with F-type plasmids; probably serves as the mating receptor on recipient cells. This chain is Outer membrane protein A, found in Shigella dysenteriae.